The sequence spans 175 residues: Nascent polypeptide-associated complex subunit beta (175 aa).

Disordered regions lie at residues 1–36 and 129–175; these read MDKEKLAKLQSQVRIGGKGTPRRKVVKKSVTSSQGD and RQAA…EELE. The NAC-A/B domain maps to 34–101; it reads QGDDRKLQAA…GQTKELTELV (68 aa). Acidic residues predominate over residues 149–163; the sequence is EGDDEIPDLVDNFDE. Residues 164–175 show a composition bias toward basic and acidic residues; sequence AEVKKSDLEELE.

It belongs to the NAC-beta family. In terms of assembly, part of the nascent polypeptide-associated complex (NAC), consisting of EGD2 and EGD1. NAC associates with ribosomes via EGD1.

It localises to the cytoplasm. It is found in the nucleus. Its function is as follows. Component of the nascent polypeptide-associated complex (NAC), a dynamic component of the ribosomal exit tunnel, protecting the emerging polypeptides from interaction with other cytoplasmic proteins to ensure appropriate nascent protein targeting. The NAC complex also promotes mitochondrial protein import by enhancing productive ribosome interactions with the outer mitochondrial membrane and blocks the inappropriate interaction of ribosomes translating non-secretory nascent polypeptides with translocation sites in the membrane of the endoplasmic reticulum. EGD1 may act as a transcription factor that exert a negative effect on the expression of several genes that are transcribed by RNA polymerase II. This is Nascent polypeptide-associated complex subunit beta (EGD1) from Cryptococcus neoformans var. neoformans serotype D (strain B-3501A) (Filobasidiella neoformans).